We begin with the raw amino-acid sequence, 346 residues long: Tryptophan--tRNA ligase (346 aa).

ATP contacts are provided by residues 21 to 23 and 30 to 31; these read QPT and GN. Positions 22-31 match the 'HIGH' region motif; the sequence is PTADSYHLGN. Asp147 lines the L-tryptophan pocket. Residues 159-161, Ile198, and 207-211 contribute to the ATP site; these read GED and KMSKS. The short motif at 207–211 is the 'KMSKS' region element; that stretch reads KMSKS.

Belongs to the class-I aminoacyl-tRNA synthetase family. In terms of assembly, homodimer.

The protein localises to the cytoplasm. It catalyses the reaction tRNA(Trp) + L-tryptophan + ATP = L-tryptophyl-tRNA(Trp) + AMP + diphosphate + H(+). In terms of biological role, catalyzes the attachment of tryptophan to tRNA(Trp). This is Tryptophan--tRNA ligase from Corynebacterium efficiens (strain DSM 44549 / YS-314 / AJ 12310 / JCM 11189 / NBRC 100395).